Consider the following 405-residue polypeptide: 3-isopropylmalate dehydrogenase (405 aa).

86 to 104 (GAANTVWTTPDGRTDVRPE) is an NAD(+) binding site. Substrate contacts are provided by arginine 111, arginine 121, arginine 148, and aspartate 237. Mg(2+)-binding residues include aspartate 237, aspartate 262, and aspartate 266. 301-312 (GSAPDLGKQKVN) is a binding site for NAD(+). Residues 352–371 (ADIGGSSSTSEVGDLLPTRS) form a disordered region.

It belongs to the isocitrate and isopropylmalate dehydrogenases family. As to quaternary structure, homodimer. Requires Mg(2+) as cofactor. The cofactor is Mn(2+).

It localises to the cytoplasm. The enzyme catalyses (2R,3S)-3-isopropylmalate + NAD(+) = 4-methyl-2-oxopentanoate + CO2 + NADH. The protein operates within amino-acid biosynthesis; L-leucine biosynthesis; L-leucine from 3-methyl-2-oxobutanoate: step 3/4. Catalyzes the oxidation of 3-carboxy-2-hydroxy-4-methylpentanoate (3-isopropylmalate) to 3-carboxy-4-methyl-2-oxopentanoate. The product decarboxylates to 4-methyl-2 oxopentanoate. The sequence is that of 3-isopropylmalate dehydrogenase (LEU2) from Yarrowia lipolytica (strain CLIB 122 / E 150) (Yeast).